Consider the following 100-residue polypeptide: Small ribosomal subunit protein uS14 (100 aa).

The protein belongs to the universal ribosomal protein uS14 family. Part of the 30S ribosomal subunit. Contacts proteins S3 and S10.

Binds 16S rRNA, required for the assembly of 30S particles and may also be responsible for determining the conformation of the 16S rRNA at the A site. This is Small ribosomal subunit protein uS14 from Synechococcus sp. (strain CC9311).